The sequence spans 3343 residues: Cadherin-3 (3343 aa).

A signal peptide spans 1-26; it reads MTIRIFFSIFLLNHLIFFHLFNFTHQ. Asn-22 carries an N-linked (GlcNAc...) asparagine glycan. Residues 27 to 3228 are Extracellular-facing; sequence FSEETIKFSV…LFSNFSNTTT (3202 aa). 3 consecutive Cadherin domains span residues 28–117, 118–229, and 242–330; these read SEET…SPIF, PIDV…PPNF, and PNTK…EPNI. Residues Asn-149, Asn-250, Asn-288, Asn-369, Asn-467, and Asn-612 are each glycosylated (N-linked (GlcNAc...) asparagine). The Cadherin 4 domain occupies 632-738; the sequence is ICQITEIHVL…EDVNDNVPKF (107 aa). Residues Asn-752, Asn-806, Asn-941, Asn-966, Asn-970, Asn-985, Asn-1042, Asn-1335, Asn-1425, Asn-1429, Asn-1557, Asn-1563, Asn-1597, Asn-1624, Asn-1695, and Asn-1702 are each glycosylated (N-linked (GlcNAc...) asparagine). Residues 1279 to 1368 form the Cadherin 5 domain; the sequence is RENELMFEIE…ADVNDNKPKI (90 aa). 3 consecutive Cadherin domains span residues 1545-1648, 1676-1756, and 1757-1857; these read DKAA…APRF, AEDL…TPEF, and ELSS…HPMI. Residues Asn-1895 and Asn-1900 are each glycosylated (N-linked (GlcNAc...) asparagine). Cadherin domains are found at residues 1954–2045, 2046–2145, and 2146–2245; these read TVSV…SPRF, DQQL…NAPR, and FSRI…APIF. N-linked (GlcNAc...) asparagine glycans are attached at residues Asn-2053, Asn-2129, Asn-2203, Asn-2382, Asn-2391, Asn-2410, Asn-2414, Asn-2431, Asn-2527, Asn-2530, Asn-2564, Asn-2621, Asn-2665, Asn-2712, Asn-2798, Asn-2809, Asn-2927, Asn-2976, and Asn-3045. The Laminin G-like domain maps to 3040–3205; that stretch reads EISVRNGTSH…SSTGTSRNEC (166 aa). A disulfide bridge links Cys-3172 with Cys-3205. N-linked (GlcNAc...) asparagine glycosylation is found at Asn-3222 and Asn-3225. A helical transmembrane segment spans residues 3229 to 3250; that stretch reads LILLITLALISLIGFSVCLLAI. At 3251–3343 the chain is on the cytoplasmic side; that stretch reads RRRWRQKSPG…RDGHINMAYL (93 aa). Residues 3257–3277 form a disordered region; sequence KSPGDQKQTERSNGWTGHVMP.

Expressed in the anchor cell.

The protein resides in the cell membrane. It localises to the basolateral cell membrane. It is found in the cell junction. Its function is as follows. Cell adhesion protein involved in the control of epithelial morphogenesis. Together with metalloproteinase zmp-1 and hemicentin him-4, plays a role in anchor cell (AC) invasion during postembryonic vulval development. The polypeptide is Cadherin-3 (cdh-3) (Caenorhabditis elegans).